The following is a 150-amino-acid chain: Testis-expressed protein 22 (150 aa).

The segment covering 1-23 has biased composition (basic and acidic residues); it reads MDSRKLSPRGKKLESHLSQEHRR. Positions 1-26 are disordered; it reads MDSRKLSPRGKKLESHLSQEHRRPPL.

Its subcellular location is the cytoplasm. It localises to the cytoplasmic vesicle. It is found in the secretory vesicle. The protein resides in the acrosome. In Homo sapiens (Human), this protein is Testis-expressed protein 22 (TEX22).